The primary structure comprises 320 residues: Copper chaperone for superoxide dismutase, chloroplastic/cytosolic (320 aa).

A chloroplast-targeting transit peptide spans 1 to 67 (MASILRSVAT…LSRSFVSSPM (67 aa)). The HMA domain occupies 86–149 (QLLTEFMVDM…ALEQTGRKAR (64 aa)). Residues C97, C100, C300, and C302 each coordinate Cu cation.

It in the C-terminal section; belongs to the Cu-Zn superoxide dismutase family. Interacts with CSD1. The cofactor is Cu(2+). As to expression, expressed in roots, shoots, stems and flowers, and at lower levels in rosette and cauline leaves.

It is found in the plastid. The protein resides in the chloroplast. It localises to the cytoplasm. Its subcellular location is the cytosol. In terms of biological role, copper chaperone for the superoxide dismutases CSD1, CSD2 and CSD3. Binds copper ions and delivers them specifically to CSDs. Is required for assistance in CSDs disulfide bond formation and thereby activation of CSDs. May be involved in the negative regulation of heat stress-responsive genes and thermotolerance. The sequence is that of Copper chaperone for superoxide dismutase, chloroplastic/cytosolic (CCS) from Arabidopsis thaliana (Mouse-ear cress).